Reading from the N-terminus, the 365-residue chain is 2-aminoethylphosphonate--pyruvate transaminase (365 aa).

N6-(pyridoxal phosphate)lysine is present on Lys194.

It belongs to the class-V pyridoxal-phosphate-dependent aminotransferase family. PhnW subfamily. As to quaternary structure, homodimer. It depends on pyridoxal 5'-phosphate as a cofactor.

The enzyme catalyses (2-aminoethyl)phosphonate + pyruvate = phosphonoacetaldehyde + L-alanine. Functionally, involved in phosphonate degradation. The sequence is that of 2-aminoethylphosphonate--pyruvate transaminase from Bacillus cereus (strain ZK / E33L).